The chain runs to 310 residues: tRNA dimethylallyltransferase (310 aa).

14 to 21 is a binding site for ATP; it reads GPTASGKS. 16–21 contacts substrate; sequence TASGKS. Interaction with substrate tRNA regions lie at residues 39–42 and 163–167; these read DSMQ and QRIVR.

The protein belongs to the IPP transferase family. As to quaternary structure, monomer. Requires Mg(2+) as cofactor.

The catalysed reaction is adenosine(37) in tRNA + dimethylallyl diphosphate = N(6)-dimethylallyladenosine(37) in tRNA + diphosphate. Its function is as follows. Catalyzes the transfer of a dimethylallyl group onto the adenine at position 37 in tRNAs that read codons beginning with uridine, leading to the formation of N6-(dimethylallyl)adenosine (i(6)A). This chain is tRNA dimethylallyltransferase, found in Brucella melitensis biotype 2 (strain ATCC 23457).